The following is a 299-amino-acid chain: Acetyl-hydrolase (299 aa).

Residues 73–75 carry the Involved in the stabilization of the negatively charged intermediate by the formation of the oxyanion hole motif; that stretch reads HGG. Catalysis depends on residues Ser143, Glu237, and His267.

The protein belongs to the 'GDXG' lipolytic enzyme family.

Its pathway is secondary metabolite biosynthesis; bialaphos biosynthesis. Functionally, this protein removes the N-acetyl group from bialaphos as one of the final steps of biosynthesis of phosphinothricin tripeptide (PTT), also known as bialaphos (BA), a natural-product antibiotic and potent herbicide. The protein is Acetyl-hydrolase (bah) of Streptomyces hygroscopicus.